A 416-amino-acid polypeptide reads, in one-letter code: Putative competence-damage inducible protein (416 aa).

The protein belongs to the CinA family.

This chain is Putative competence-damage inducible protein, found in Levilactobacillus brevis (strain ATCC 367 / BCRC 12310 / CIP 105137 / JCM 1170 / LMG 11437 / NCIMB 947 / NCTC 947) (Lactobacillus brevis).